The primary structure comprises 465 residues: Cysteine--tRNA ligase (465 aa).

C30 provides a ligand contact to Zn(2+). A 'HIGH' region motif is present at residues 32–42; sequence PTVYDRAHLGN. Zn(2+) contacts are provided by C213, H238, and E242. Residues 271 to 275 carry the 'KMSKS' region motif; the sequence is KMSKS. K274 serves as a coordination point for ATP.

It belongs to the class-I aminoacyl-tRNA synthetase family. As to quaternary structure, monomer. It depends on Zn(2+) as a cofactor.

It is found in the cytoplasm. It carries out the reaction tRNA(Cys) + L-cysteine + ATP = L-cysteinyl-tRNA(Cys) + AMP + diphosphate. This Ruegeria pomeroyi (strain ATCC 700808 / DSM 15171 / DSS-3) (Silicibacter pomeroyi) protein is Cysteine--tRNA ligase.